A 504-amino-acid chain; its full sequence is Putative glycerol-3-phosphate transporter 2 (504 aa).

12 consecutive transmembrane segments (helical) span residues 31–51, 84–104, 116–136, 145–165, 178–198, 210–230, 280–302, 324–344, 352–372, 378–398, 424–444, and 452–472; these read LSFK…YIAF, ALLG…MFVA, FLTI…VAFW, FLAV…CIVA, MIMG…SLIA, FLGP…FLPV, IPGV…TFLY, GNLS…AGYI, AITA…YRVF, TINV…FALI, AIID…TGYI, and VFYM…KLII.

Belongs to the major facilitator superfamily. Organophosphate:Pi antiporter (OPA) (TC 2.A.1.4) family. Expressed in the root-hair differentiation zone.

Its subcellular location is the membrane. In Arabidopsis thaliana (Mouse-ear cress), this protein is Putative glycerol-3-phosphate transporter 2.